We begin with the raw amino-acid sequence, 174 residues long: UPF0340 protein MW2038 (174 aa).

This sequence belongs to the UPF0340 family.

This Staphylococcus aureus (strain MW2) protein is UPF0340 protein MW2038.